Here is a 378-residue protein sequence, read N- to C-terminus: Uroporphyrinogen decarboxylase (378 aa).

Residues 40 to 44, D90, Y167, S222, and H355 each bind substrate; that span reads RQAGR.

The protein belongs to the uroporphyrinogen decarboxylase family. As to quaternary structure, homodimer.

The protein localises to the cytoplasm. The catalysed reaction is uroporphyrinogen III + 4 H(+) = coproporphyrinogen III + 4 CO2. Its pathway is porphyrin-containing compound metabolism; protoporphyrin-IX biosynthesis; coproporphyrinogen-III from 5-aminolevulinate: step 4/4. In terms of biological role, catalyzes the decarboxylation of four acetate groups of uroporphyrinogen-III to yield coproporphyrinogen-III. This chain is Uroporphyrinogen decarboxylase, found in Psychrobacter cryohalolentis (strain ATCC BAA-1226 / DSM 17306 / VKM B-2378 / K5).